A 417-amino-acid polypeptide reads, in one-letter code: Serine hydroxymethyltransferase (417 aa).

(6S)-5,6,7,8-tetrahydrofolate-binding positions include Leu121 and 125–127 (GHL). Lys229 carries the N6-(pyridoxal phosphate)lysine modification. 355–357 (SPF) provides a ligand contact to (6S)-5,6,7,8-tetrahydrofolate.

The protein belongs to the SHMT family. In terms of assembly, homodimer. Pyridoxal 5'-phosphate serves as cofactor.

It localises to the cytoplasm. It carries out the reaction (6R)-5,10-methylene-5,6,7,8-tetrahydrofolate + glycine + H2O = (6S)-5,6,7,8-tetrahydrofolate + L-serine. It participates in one-carbon metabolism; tetrahydrofolate interconversion. It functions in the pathway amino-acid biosynthesis; glycine biosynthesis; glycine from L-serine: step 1/1. Functionally, catalyzes the reversible interconversion of serine and glycine with tetrahydrofolate (THF) serving as the one-carbon carrier. This reaction serves as the major source of one-carbon groups required for the biosynthesis of purines, thymidylate, methionine, and other important biomolecules. Also exhibits THF-independent aldolase activity toward beta-hydroxyamino acids, producing glycine and aldehydes, via a retro-aldol mechanism. The sequence is that of Serine hydroxymethyltransferase from Xylella fastidiosa (strain M12).